Consider the following 680-residue polypeptide: DNA ligase (680 aa).

NAD(+)-binding positions include 35-39 (DAQYD), 84-85 (SL), and Glu115. Lys117 acts as the N6-AMP-lysine intermediate in catalysis. The NAD(+) site is built by Arg138, Glu174, Lys291, and Lys315. Zn(2+) is bound by residues Cys419, Cys422, Cys437, and Cys442. Residues 601–680 (NKNMPFSGME…REFINMLEQS (80 aa)) form the BRCT domain.

Belongs to the NAD-dependent DNA ligase family. LigA subfamily. It depends on Mg(2+) as a cofactor. Requires Mn(2+) as cofactor.

It carries out the reaction NAD(+) + (deoxyribonucleotide)n-3'-hydroxyl + 5'-phospho-(deoxyribonucleotide)m = (deoxyribonucleotide)n+m + AMP + beta-nicotinamide D-nucleotide.. DNA ligase that catalyzes the formation of phosphodiester linkages between 5'-phosphoryl and 3'-hydroxyl groups in double-stranded DNA using NAD as a coenzyme and as the energy source for the reaction. It is essential for DNA replication and repair of damaged DNA. The sequence is that of DNA ligase from Dehalococcoides mccartyi (strain ATCC BAA-2100 / JCM 16839 / KCTC 5957 / BAV1).